A 398-amino-acid chain; its full sequence is Ureide permease 2 (398 aa).

Residues 1–10 are Extracellular-facing; sequence MYLVESKGGA. Residues 11 to 31 form a helical membrane-spanning segment; sequence IACMLLALLSLGTWPAVLTLL. Topologically, residues 32 to 44 are cytoplasmic; the sequence is ERRGRLPQHTYLD. The helical transmembrane segment at 45-65 threads the bilayer; sequence YSITNLLAAIIIAFTFGQIGS. Topologically, residues 66 to 81 are extracellular; sequence TKPDSPNFITQLAQDN. Residues 82-102 traverse the membrane as a helical segment; the sequence is WPSVMFAMAGGIVLSLGNLST. Over 103 to 104 the chain is Cytoplasmic; the sequence is QY. A helical transmembrane segment spans residues 105 to 125; sequence AWALVGLSVTEVITSSITVVI. The Extracellular segment spans residues 126–139; the sequence is GSTLNYFLDDKINK. A helical transmembrane segment spans residues 140-160; it reads AEILFPGVACFLIAVCLGSAV. At 161 to 229 the chain is on the cytoplasmic side; sequence HRSNADDNKA…RAIKVFGKRK (69 aa). Positions 176 to 200 are disordered; it reads ETAKQEASGPSTEIGTNSSKDLETN. Residues 183-200 are compositionally biased toward polar residues; it reads SGPSTEIGTNSSKDLETN. Residue 221 to 228 coordinates ATP; the sequence is AIKVFGKR. The chain crosses the membrane as a helical span at residues 230–250; the sequence is IIGLAITFFAGLCFSLFSPAF. Residues 251–272 are Extracellular-facing; that stretch reads NLATNDQWNRLKQGVPKLVVYT. Residues 273–293 form a helical membrane-spanning segment; it reads AFFYFSVSCFIIALILNVVFL. Topologically, residues 294–315 are cytoplasmic; that stretch reads YYPVLGLPKSSFKAYLNDWNGR. The helical transmembrane segment at 316 to 336 threads the bilayer; it reads YWAFLAGFLCGFGNGLQFMGG. The Extracellular segment spans residues 337–341; that stretch reads QAAGY. A helical transmembrane segment spans residues 342-362; that stretch reads AAADSVQALPLVSTFWGVVLF. Residues 363–371 lie on the Cytoplasmic side of the membrane; that stretch reads GEYRRSSRK. Residues 372–392 form a helical membrane-spanning segment; the sequence is TYLLLFCMLFMFISAVAVLMA. Residues 393–398 are Extracellular-facing; sequence SSGHRK.

This sequence belongs to the plant ureide permease (TC 2.A.7.19) family. In terms of tissue distribution, expressed in root xylem, cotyledons and leaves. Expressed in leaf blades, petioles, trichomes, stems, flower stigma, the upper part of pedicels, sepals, and the top and bottom parts of carpels in siliques.

The protein resides in the membrane. Functionally, proton-coupled transporter that transports a wide spectrum of oxo derivatives of heterocyclic nitrogen compounds, including allantoin, uric acid and xanthine, but not adenine. Mediates high affinity transport of uracil and 5-fluorouracil (a toxic uracil analog). Mediates transport of free pyrimidines and may function during early seedling development in salvage pathways, by the utilization of pyrimidines from seed storage tissue. This Arabidopsis thaliana (Mouse-ear cress) protein is Ureide permease 2.